Reading from the N-terminus, the 493-residue chain is Transcript termination protein A18 (493 aa).

The region spanning 100 to 256 (MIELKRPLYI…NSIINIAKLS (157 aa)) is the Helicase ATP-binding domain. 113–120 (LACGFGKT) provides a ligand contact to ATP. The short motif at 206-209 (DESH) is the DESH box element.

Belongs to the helicase family. Poxviruses subfamily. In terms of assembly, interacts with G2. Might be part of a transcription complex composed at least of G2, A18, and H5.

It localises to the virion. DNA helicase which seems to act as a postreplicative transcription termination factor. Involved in ATP-dependent release of nascent RNA. Forms a stable complex with single-stranded DNA, and to a lesser extent RNA. The protein is Transcript termination protein A18 of Camelus.